A 608-amino-acid chain; its full sequence is Protein FAM151A (608 aa).

The chain crosses the membrane as a helical span at residues 14–34 (WILAGSVTVTLVLAISLILGL). A compositionally biased stretch (polar residues) spans 586 to 596 (VSSNRPSSRIG). Residues 586–608 (VSSNRPSSRIGPSSVEGFPGESR) form a disordered region.

Belongs to the menorin family.

The protein resides in the membrane. The sequence is that of Protein FAM151A (Fam151a) from Mus musculus (Mouse).